The primary structure comprises 314 residues: Putative S-adenosyl-L-methionine-dependent methyltransferase MUL_4402 (314 aa).

Residues D132 and 161–162 (DL) each bind S-adenosyl-L-methionine. The interval 291–314 (RPVPDDAEGPVPPTLFVSAHRPAA) is disordered.

Belongs to the UPF0677 family.

In terms of biological role, exhibits S-adenosyl-L-methionine-dependent methyltransferase activity. This Mycobacterium ulcerans (strain Agy99) protein is Putative S-adenosyl-L-methionine-dependent methyltransferase MUL_4402.